A 413-amino-acid chain; its full sequence is MVSKSIVALAACVAMCVAQPVEKMPVLKDQPAEVLFRESQATVLECVTENGDKDVKYSWQKDGKEFKWQEHNIAQRKDEGSLVFLKPEAKDEGQYRCFAESAAGVATSHIISFRRTYMVVPTTFKTVEKKPVEGSWLKLECSIPEGYPKPTIVWRKQLGEDESIADSILARRITQSPEGDLYFTSVEKEDVSESYKYVCAAKSPAIDGDVPLVGYTIKSLEKNTNQKNGELVPMYVSNDMIAKAGDVTMIYCMYGGVPMAYPNWFKDGKDVNGKPSDRITRHNRTSGKRLFIKETLLEDQGTFTCDVNNEVGKPQKHSVKLTVVSGPRFTKKPEKQVIAKQGQDFVIPCEVSALPAAPVSWTFNAKPISGSRVVASPSGLTIKGIQKSDKGYYGCQAHNEHGDAYAETLVIVA.

A signal peptide spans 1 to 18; that stretch reads MVSKSIVALAACVAMCVA. 4 Ig-like C2-type domains span residues 25 to 112, 121 to 215, 233 to 322, and 327 to 411; these read PVLK…HIIS, PTTF…LVGY, PMYV…VKLT, and PRFT…TLVI. Cystine bridges form between cysteine 46–cysteine 97, cysteine 141–cysteine 199, cysteine 252–cysteine 305, and cysteine 349–cysteine 395. A glycan (N-linked (GlcNAc...) asparagine) is linked at asparagine 283.

This sequence belongs to the hemolin family. Hemolymph.

The protein localises to the secreted. Functionally, insect-immune protein with antimicrobial activity. Forms a protein complex at the bacterial surface. Can inhibit hemocyte aggregation. This is Hemolin from Manduca sexta (Tobacco hawkmoth).